The chain runs to 345 residues: Anthranilate phosphoribosyltransferase (345 aa).

5-phospho-alpha-D-ribose 1-diphosphate-binding positions include Gly81, 84-85 (GD), Ser89, 91-94 (NVST), 109-117 (KHGNRAATS), and Ala121. Residue Gly81 coordinates anthranilate. Ser93 is a binding site for Mg(2+). Asn112 lines the anthranilate pocket. Arg167 lines the anthranilate pocket. Asp226 and Glu227 together coordinate Mg(2+).

This sequence belongs to the anthranilate phosphoribosyltransferase family. Homodimer. It depends on Mg(2+) as a cofactor.

It catalyses the reaction N-(5-phospho-beta-D-ribosyl)anthranilate + diphosphate = 5-phospho-alpha-D-ribose 1-diphosphate + anthranilate. It functions in the pathway amino-acid biosynthesis; L-tryptophan biosynthesis; L-tryptophan from chorismate: step 2/5. Catalyzes the transfer of the phosphoribosyl group of 5-phosphorylribose-1-pyrophosphate (PRPP) to anthranilate to yield N-(5'-phosphoribosyl)-anthranilate (PRA). This is Anthranilate phosphoribosyltransferase from Methylobacterium radiotolerans (strain ATCC 27329 / DSM 1819 / JCM 2831 / NBRC 15690 / NCIMB 10815 / 0-1).